Here is a 35-residue protein sequence, read N- to C-terminus: Photosystem II reaction center protein Psb30 (35 aa).

The helical transmembrane segment at Val7 to Leu27 threads the bilayer.

This sequence belongs to the Psb30/Ycf12 family. As to quaternary structure, PSII is composed of 1 copy each of membrane proteins PsbA, PsbB, PsbC, PsbD, PsbE, PsbF, PsbH, PsbI, PsbJ, PsbK, PsbL, PsbM, PsbT, PsbX, PsbY, PsbZ, Psb30/Ycf12, peripheral proteins PsbO, CyanoQ (PsbQ), PsbU, PsbV and a large number of cofactors. It forms dimeric complexes.

It localises to the cellular thylakoid membrane. A core subunit of photosystem II (PSII), probably helps stabilize the reaction center. The chain is Photosystem II reaction center protein Psb30 from Synechococcus sp. (strain JA-3-3Ab) (Cyanobacteria bacterium Yellowstone A-Prime).